The chain runs to 588 residues: Proline--tRNA ligase (588 aa).

It belongs to the class-II aminoacyl-tRNA synthetase family. ProS type 1 subfamily. Homodimer.

The protein resides in the cytoplasm. It catalyses the reaction tRNA(Pro) + L-proline + ATP = L-prolyl-tRNA(Pro) + AMP + diphosphate. Functionally, catalyzes the attachment of proline to tRNA(Pro) in a two-step reaction: proline is first activated by ATP to form Pro-AMP and then transferred to the acceptor end of tRNA(Pro). As ProRS can inadvertently accommodate and process non-cognate amino acids such as alanine and cysteine, to avoid such errors it has two additional distinct editing activities against alanine. One activity is designated as 'pretransfer' editing and involves the tRNA(Pro)-independent hydrolysis of activated Ala-AMP. The other activity is designated 'posttransfer' editing and involves deacylation of mischarged Ala-tRNA(Pro). The misacylated Cys-tRNA(Pro) is not edited by ProRS. The polypeptide is Proline--tRNA ligase (Helicobacter hepaticus (strain ATCC 51449 / 3B1)).